Reading from the N-terminus, the 368-residue chain is Probable pectate lyase 4 (368 aa).

An N-terminal signal peptide occupies residues 1–25; it reads MASLVVIVSLLLAAFASPLLETAHS. Residue Asn-27 is glycosylated (N-linked (GlcNAc...) asparagine). Ca(2+) contacts are provided by Asp-167, Asp-191, and Asp-195. Arg-247 is an active-site residue.

The protein belongs to the polysaccharide lyase 1 family. Requires Ca(2+) as cofactor.

The enzyme catalyses Eliminative cleavage of (1-&gt;4)-alpha-D-galacturonan to give oligosaccharides with 4-deoxy-alpha-D-galact-4-enuronosyl groups at their non-reducing ends.. It participates in glycan metabolism; pectin degradation; 2-dehydro-3-deoxy-D-gluconate from pectin: step 2/5. This Arabidopsis thaliana (Mouse-ear cress) protein is Probable pectate lyase 4.